The chain runs to 540 residues: NAD(P)H-quinone oxidoreductase subunit 2 B, chloroplastic (540 aa).

A run of 13 helical transmembrane segments spans residues 24-44 (LLLF…GLIL), 57-77 (IPWL…ALLF), 99-119 (IFQF…VEYI), 124-144 (MAIT…MFLC), 149-169 (FITI…LSGY), 183-203 (YLLM…WLYG), 227-247 (PGIS…LSPA), 325-345 (WHLL…LIAI), 353-373 (MLAY…IVGD), 384-404 (YMLF…LFGL), 425-445 (ALSL…AGFF), 448-468 (LYLF…IGLL), and 514-534 (MIVC…IIAI).

This sequence belongs to the complex I subunit 2 family. In terms of assembly, NDH is composed of at least 16 different subunits, 5 of which are encoded in the nucleus.

The protein localises to the plastid. The protein resides in the chloroplast thylakoid membrane. It catalyses the reaction a plastoquinone + NADH + (n+1) H(+)(in) = a plastoquinol + NAD(+) + n H(+)(out). The enzyme catalyses a plastoquinone + NADPH + (n+1) H(+)(in) = a plastoquinol + NADP(+) + n H(+)(out). In terms of biological role, NDH shuttles electrons from NAD(P)H:plastoquinone, via FMN and iron-sulfur (Fe-S) centers, to quinones in the photosynthetic chain and possibly in a chloroplast respiratory chain. The immediate electron acceptor for the enzyme in this species is believed to be plastoquinone. Couples the redox reaction to proton translocation, and thus conserves the redox energy in a proton gradient. The polypeptide is NAD(P)H-quinone oxidoreductase subunit 2 B, chloroplastic (Coffea arabica (Arabian coffee)).